Reading from the N-terminus, the 885-residue chain is Leucine--tRNA ligase (885 aa).

The 'HIGH' region signature appears at 48 to 58 (PYPSGKLHMGH). Positions 639–643 (TMSKS) match the 'KMSKS' region motif. Residue Lys642 coordinates ATP.

Belongs to the class-I aminoacyl-tRNA synthetase family.

It localises to the cytoplasm. It catalyses the reaction tRNA(Leu) + L-leucine + ATP = L-leucyl-tRNA(Leu) + AMP + diphosphate. The protein is Leucine--tRNA ligase of Bordetella parapertussis (strain 12822 / ATCC BAA-587 / NCTC 13253).